We begin with the raw amino-acid sequence, 173 residues long: Bifunctional protein PyrR (173 aa).

The short motif at I93 to T105 is the PRPP-binding element.

It belongs to the purine/pyrimidine phosphoribosyltransferase family. PyrR subfamily. Homodimer and homohexamer; in equilibrium.

The catalysed reaction is UMP + diphosphate = 5-phospho-alpha-D-ribose 1-diphosphate + uracil. Its function is as follows. Regulates transcriptional attenuation of the pyrimidine nucleotide (pyr) operon by binding in a uridine-dependent manner to specific sites on pyr mRNA. This disrupts an antiterminator hairpin in the RNA and favors formation of a downstream transcription terminator, leading to a reduced expression of downstream genes. In terms of biological role, also displays a weak uracil phosphoribosyltransferase activity which is not physiologically significant. This chain is Bifunctional protein PyrR, found in Streptococcus agalactiae serotype Ia (strain ATCC 27591 / A909 / CDC SS700).